We begin with the raw amino-acid sequence, 660 residues long: Bifunctional polymyxin resistance protein ArnA (660 aa).

Positions methionine 1–leucine 304 are formyltransferase ArnAFT. Histidine 86–isoleucine 88 contacts (6R)-10-formyltetrahydrofolate. Catalysis depends on histidine 104, which acts as the Proton donor; for formyltransferase activity. (6R)-10-formyltetrahydrofolate is bound by residues arginine 114 and valine 136 to aspartate 140. The interval arginine 314 to serine 660 is dehydrogenase ArnADH. Residues aspartate 347 and aspartate 368–isoleucine 369 contribute to the NAD(+) site. UDP-alpha-D-glucuronate-binding positions include alanine 393, tyrosine 398, and threonine 432 to serine 433. Glutamate 434 acts as the Proton acceptor; for decarboxylase activity in catalysis. UDP-alpha-D-glucuronate-binding positions include arginine 460, asparagine 492, lysine 526–arginine 535, and tyrosine 613. Arginine 619 acts as the Proton donor; for decarboxylase activity in catalysis.

The protein in the N-terminal section; belongs to the Fmt family. UDP-L-Ara4N formyltransferase subfamily. It in the C-terminal section; belongs to the NAD(P)-dependent epimerase/dehydratase family. UDP-glucuronic acid decarboxylase subfamily. In terms of assembly, homohexamer, formed by a dimer of trimers.

The catalysed reaction is UDP-alpha-D-glucuronate + NAD(+) = UDP-beta-L-threo-pentopyranos-4-ulose + CO2 + NADH. The enzyme catalyses UDP-4-amino-4-deoxy-beta-L-arabinose + (6R)-10-formyltetrahydrofolate = UDP-4-deoxy-4-formamido-beta-L-arabinose + (6S)-5,6,7,8-tetrahydrofolate + H(+). It functions in the pathway nucleotide-sugar biosynthesis; UDP-4-deoxy-4-formamido-beta-L-arabinose biosynthesis; UDP-4-deoxy-4-formamido-beta-L-arabinose from UDP-alpha-D-glucuronate: step 1/3. It participates in nucleotide-sugar biosynthesis; UDP-4-deoxy-4-formamido-beta-L-arabinose biosynthesis; UDP-4-deoxy-4-formamido-beta-L-arabinose from UDP-alpha-D-glucuronate: step 3/3. The protein operates within bacterial outer membrane biogenesis; lipopolysaccharide biosynthesis. Functionally, bifunctional enzyme that catalyzes the oxidative decarboxylation of UDP-glucuronic acid (UDP-GlcUA) to UDP-4-keto-arabinose (UDP-Ara4O) and the addition of a formyl group to UDP-4-amino-4-deoxy-L-arabinose (UDP-L-Ara4N) to form UDP-L-4-formamido-arabinose (UDP-L-Ara4FN). The modified arabinose is attached to lipid A and is required for resistance to polymyxin and cationic antimicrobial peptides. The chain is Bifunctional polymyxin resistance protein ArnA from Shigella boydii serotype 4 (strain Sb227).